The primary structure comprises 572 residues: MRLLLVLLALIFSVVSAQQNTCAQLCKDNKDMCCSLSKNSEYLLTTHNKEEKTQSCGDKFNSEDYYVAGSNRFGCGNSVTICKVQSDDSKIEITPNRRFGHHGGGVAGSIANAASSISSVANSVSSMTNSVSSLANSVSSLAGSMSSSGSSSSSGSSGSSSSSSGSSGGGSSGGGSGGGGGGSGLVVGKERRFGKHGGGGIAGSMNSAATSLSSLASDVSSVASVVSSLSSSSSADAGSSGAQGSGSTSGDGNAPPGSTGGTGGSSGSSGGGSGGGGGGSGLVVGERKFGHHGGGGVAGSIANAASSIASVANSVSSMTNSVSSLANSVSSLAGSMSSSGSSSSSGSSGSSSSSSSSGSSGGSSGGGSSGGGSGGGGGGSGLVVGERKFGHHGGGGVAGSIANAASSIASVANSVSSMTNSVSSLANSVSSLAGSSSSSGSSGSSSSSSSSGSSGGSSGGSSGGGGGSGELLSQNQVFATCVRVISTNVGPNVDIEDKIGKPIMDASTKVCEDLFGSPYCQWTDNHIVTAVSSKLDDGFPTQGAFNVTRSQYGYIMENGHYLNNKGNSVRIN.

An N-terminal signal peptide occupies residues 1–17 (MRLLLVLLALIFSVVSA). Low complexity predominate over residues 145-165 (MSSSGSSSSSGSSGSSSSSSG). Disordered stretches follow at residues 145 to 199 (MSSS…HGGG), 231 to 297 (SSSS…GGGV), 326 to 388 (ANSV…GERK), and 433 to 469 (AGSSSSSGSSGSSSSSSSSGSSGGSSGGSSGGGGGSG). Residues 166–185 (SSGGGSSGGGSGGGGGGSGL) are compositionally biased toward gly residues. Low complexity predominate over residues 231–240 (SSSSADAGSS). Gly residues predominate over residues 258 to 282 (STGGTGGSSGSSGGGSGGGGGGSGL). A compositionally biased stretch (low complexity) spans 326-358 (ANSVSSLAGSMSSSGSSSSSGSSGSSSSSSSSG). Positions 359-382 (SSGGSSGGGSSGGGSGGGGGGSGL) are enriched in gly residues. Residues 433 to 452 (AGSSSSSGSSGSSSSSSSSG) show a composition bias toward low complexity. Positions 453-469 (SSGGSSGGSSGGGGGSG) are enriched in gly residues.

Belongs to the dictyostelium lysozyme family.

The polypeptide is Putative lysozyme-like protein (alyL) (Dictyostelium discoideum (Social amoeba)).